A 307-amino-acid polypeptide reads, in one-letter code: GTPase Era (307 aa).

In terms of domain architecture, Era-type G spans Arg-7–Lys-181. The tract at residues Gly-15–Ser-22 is G1. Gly-15–Ser-22 contacts GTP. Positions Gln-41 to Asn-45 are G2. Residues Asp-62 to Gly-65 form a G3 region. Residues Asp-62–Leu-66 and Asn-130–Asp-133 contribute to the GTP site. Positions Asn-130 to Asp-133 are G4. A G5 region spans residues Ile-160–Ala-162. Positions Leu-212–Glu-290 constitute a KH type-2 domain.

Belongs to the TRAFAC class TrmE-Era-EngA-EngB-Septin-like GTPase superfamily. Era GTPase family. As to quaternary structure, monomer.

It is found in the cytoplasm. The protein localises to the cell inner membrane. An essential GTPase that binds both GDP and GTP, with rapid nucleotide exchange. Plays a role in 16S rRNA processing and 30S ribosomal subunit biogenesis and possibly also in cell cycle regulation and energy metabolism. In Desulfovibrio desulfuricans (strain ATCC 27774 / DSM 6949 / MB), this protein is GTPase Era.